A 114-amino-acid chain; its full sequence is Ribonuclease P protein component (114 aa).

The protein belongs to the RnpA family. In terms of assembly, consists of a catalytic RNA component (M1 or rnpB) and a protein subunit.

It catalyses the reaction Endonucleolytic cleavage of RNA, removing 5'-extranucleotides from tRNA precursor.. In terms of biological role, RNaseP catalyzes the removal of the 5'-leader sequence from pre-tRNA to produce the mature 5'-terminus. It can also cleave other RNA substrates such as 4.5S RNA. The protein component plays an auxiliary but essential role in vivo by binding to the 5'-leader sequence and broadening the substrate specificity of the ribozyme. The protein is Ribonuclease P protein component of Clostridioides difficile (strain 630) (Peptoclostridium difficile).